The sequence spans 388 residues: Succinate--CoA ligase [ADP-forming] subunit beta (388 aa).

Residues 9–244 (KALFAEYGLP…PSQDDAREAH (236 aa)) enclose the ATP-grasp domain. Residues Lys-46, 53 to 55 (GRG), Glu-99, Thr-102, and Glu-107 each bind ATP. Positions 199 and 213 each coordinate Mg(2+). Substrate contacts are provided by residues Asn-264 and 321–323 (GIV).

Belongs to the succinate/malate CoA ligase beta subunit family. Heterotetramer of two alpha and two beta subunits. The cofactor is Mg(2+).

It catalyses the reaction succinate + ATP + CoA = succinyl-CoA + ADP + phosphate. The enzyme catalyses GTP + succinate + CoA = succinyl-CoA + GDP + phosphate. It functions in the pathway carbohydrate metabolism; tricarboxylic acid cycle; succinate from succinyl-CoA (ligase route): step 1/1. Functionally, succinyl-CoA synthetase functions in the citric acid cycle (TCA), coupling the hydrolysis of succinyl-CoA to the synthesis of either ATP or GTP and thus represents the only step of substrate-level phosphorylation in the TCA. The beta subunit provides nucleotide specificity of the enzyme and binds the substrate succinate, while the binding sites for coenzyme A and phosphate are found in the alpha subunit. In Shewanella loihica (strain ATCC BAA-1088 / PV-4), this protein is Succinate--CoA ligase [ADP-forming] subunit beta.